Reading from the N-terminus, the 250-residue chain is rRNA methyltransferase 2, mitochondrial (250 aa).

The transit peptide at 1–35 (MRLVFTGNCVFKRLLHTEIGGKYAKQQPRNLKGRS) directs the protein to the mitochondrion. S-adenosyl-L-methionine contacts are provided by residues 90–93 (PGSW), Asp-119, 136–137 (DF), and Asp-161. Lys-201 functions as the Proton acceptor in the catalytic mechanism.

The protein belongs to the class I-like SAM-binding methyltransferase superfamily. RNA methyltransferase RlmE family.

The protein resides in the mitochondrion. The catalysed reaction is a uridine in rRNA + S-adenosyl-L-methionine = a 2'-O-methyluridine in rRNA + S-adenosyl-L-homocysteine + H(+). Functionally, S-adenosyl-L-methionine-dependent 2'-O-ribose methyltransferase that catalyzes the formation of 2'-O-methyluridine at position 1579 (Um1579) in the mitochondrial large subunit ribosomal RNA (mtLSU rRNA), a universally conserved modification in the peptidyl transferase domain of the mtLSU rRNA. This activity may require prior 2'-O-methylguanosine modification at position 1580 (Gm1580) by MRM3. Essential for late-stage assembly of mtLSU required for efficient translation of mitochondrial DNA encoded proteins; methyltransferase activity is not required for this function. Essential for mitochondrial respiratory function. The protein is rRNA methyltransferase 2, mitochondrial of Drosophila melanogaster (Fruit fly).